A 61-amino-acid chain; its full sequence is Small ribosomal subunit protein uS14B (61 aa).

Residues C24, C27, C40, and C43 each coordinate Zn(2+).

Belongs to the universal ribosomal protein uS14 family. Zinc-binding uS14 subfamily. Part of the 30S ribosomal subunit. Contacts proteins S3 and S10. Zn(2+) serves as cofactor.

Binds 16S rRNA, required for the assembly of 30S particles and may also be responsible for determining the conformation of the 16S rRNA at the A site. The polypeptide is Small ribosomal subunit protein uS14B (Streptococcus pyogenes serotype M6 (strain ATCC BAA-946 / MGAS10394)).